A 129-amino-acid polypeptide reads, in one-letter code: Glycine cleavage system H protein (129 aa).

Residues 24 to 106 (TYTVGITEHA…YAGGWIFKIK (83 aa)) form the Lipoyl-binding domain. Lys-65 carries the N6-lipoyllysine modification.

Belongs to the GcvH family. In terms of assembly, the glycine cleavage system is composed of four proteins: P, T, L and H. (R)-lipoate is required as a cofactor.

The glycine cleavage system catalyzes the degradation of glycine. The H protein shuttles the methylamine group of glycine from the P protein to the T protein. This chain is Glycine cleavage system H protein, found in Shigella dysenteriae serotype 1 (strain Sd197).